A 254-amino-acid chain; its full sequence is Mannose-binding protein (254 aa).

The signal sequence occupies residues 1-19 (MTLLQPFSALLLCLSLMMA). A disordered region spans residues 46 to 99 (NGLPGRDGRDGPKGEKGDPGEGLRGLQGLPGKAGPQGLKGEVGPQGEKGQKGER). Over residues 51 to 66 (RDGRDGPKGEKGDPGE) the composition is skewed to basic and acidic residues. Pro-57 is modified (4-hydroxyproline). 2 positions are modified to 5-hydroxylysine: Lys-58 and Lys-61. O-linked (Gal...) hydroxylysine glycosylation is found at Lys-58 and Lys-61. 4-hydroxyproline is present on Pro-75. Residues Lys-93 and Lys-96 each carry the 5-hydroxylysine modification. Residues 140 to 250 (VGKKMFVSTG…LDCSNSNIFI (111 aa)) form the C-type lectin domain. 2 cysteine pairs are disulfide-bonded: Cys-161-Cys-252 and Cys-229-Cys-243.

As to quaternary structure, oligomeric complex of 3 or more homotrimers.

Its subcellular location is the secreted. Its function is as follows. Calcium-dependent lectin involved in innate immune defense. Binds mannose, fucose and N-acetylglucosamine on different microorganisms and activates the lectin complement pathway. In Gallus gallus (Chicken), this protein is Mannose-binding protein.